A 189-amino-acid chain; its full sequence is HGPRTase-like protein (189 aa).

This sequence belongs to the purine/pyrimidine phosphoribosyltransferase family. Archaeal HPRT subfamily.

Its function is as follows. May catalyze a purine salvage reaction, the substrate is unknown. The protein is HGPRTase-like protein of Halorubrum lacusprofundi (strain ATCC 49239 / DSM 5036 / JCM 8891 / ACAM 34).